Here is a 440-residue protein sequence, read N- to C-terminus: SET domain-containing protein 4 (440 aa).

A compositionally biased stretch (basic residues) spans 1 to 16; it reads MQKGKGRTSRIRRRKL. Residues 1–24 are disordered; sequence MQKGKGRTSRIRRRKLCGSSESRG. The region spanning 48–273 is the SET domain; sequence SNLAPACFPG…KHEEVFICYG (226 aa). Residue Tyr-272 coordinates S-adenosyl-L-methionine.

It belongs to the class V-like SAM-binding methyltransferase superfamily. SETD4 family. Forms a ternary complex with TBK1 and ZNF268; the interaction with TBK1 is ZNF268-dependent and leads to TBK1 monomethylation.

It is found in the cytoplasm. Its subcellular location is the cytosol. The protein resides in the nucleus. The enzyme catalyses L-lysyl(4)-[histone H3] + S-adenosyl-L-methionine = N(6)-methyl-L-lysyl(4)-[histone H3] + S-adenosyl-L-homocysteine + H(+). It carries out the reaction N(6)-methyl-L-lysyl(4)-[histone H3] + S-adenosyl-L-methionine = N(6),N(6)-dimethyl-L-lysyl(4)-[histone H3] + S-adenosyl-L-homocysteine + H(+). The catalysed reaction is L-lysyl(20)-[histone H4] + S-adenosyl-L-methionine = N(6)-methyl-L-lysyl(20)-[histone H4] + S-adenosyl-L-homocysteine + H(+). It catalyses the reaction N(6)-methyl-L-lysyl(20)-[histone H4] + S-adenosyl-L-methionine = N(6),N(6)-dimethyl-L-lysyl(20)-[histone H4] + S-adenosyl-L-homocysteine + H(+). The enzyme catalyses N(6),N(6)-dimethyl-L-lysyl(20)-[histone H4] + S-adenosyl-L-methionine = N(6),N(6),N(6)-trimethyl-L-lysyl(20)-[histone H4] + S-adenosyl-L-homocysteine + H(+). It carries out the reaction L-lysyl-[protein] + S-adenosyl-L-methionine = N(6)-methyl-L-lysyl-[protein] + S-adenosyl-L-homocysteine + H(+). Protein-lysine N-methyltransferase that methylates both histones and non-histone proteins. Via its catalytic activity, regulates many processes, including cell proliferation, cell differentiation, inflammatory response and apoptosis. Regulates the inflammatory response by mediating mono- and dimethylation of 'Lys-4' of histone H3 (H3K4me1 and H3K4me2, respectively), leading to activate the transcription of pro-inflammatory cytokines IL6 and TNF-alpha. Through the catalysis of TBK1 monomethylation, may regulate virus-induced interferon signaling. TBK1 monomethylation enhances its interaction with MAVS, STING and IRF3, hence promoting antiviral interferon signaling. Also involved in the regulation of stem cell quiescence by catalyzing the trimethylation of 'Lys-20' of histone H4 (H4K20me3), thereby promoting heterochromatin formation. In the brain, epigenetically controls quiescence of neural stem cells for sustaining a protected neural stem cell population and maintaining a stem cell reservoir for neurogenesis. Involved in proliferation, migration, paracrine and myogenic differentiation of bone marrow mesenchymal stem cells (BMSCs). Through the catalysis of XRCC5/Ku70 trimethylation, regulates BAX-mediated apoptosis. SETD4-catalyzed XRCC5 methylation results in XRCC5 translocation to the cytoplasm, where it interacts with BAX, sequestering it from the mitochondria, hence preventing BAX-mediated apoptosis. This Homo sapiens (Human) protein is SET domain-containing protein 4.